The sequence spans 282 residues: tRNA N(3)-cytidine methyltransferase METTL6 (282 aa).

Trp-45, Tyr-49, Gly-87, Asp-110, Asp-136, Leu-137, and Ile-157 together coordinate S-adenosyl-L-methionine.

This sequence belongs to the methyltransferase superfamily. METL family. As to quaternary structure, monomer. Interacts with SARS1/SerRS; interaction is mediated via tRNA(Ser) and is required for N(3)-methylcytidine methylation.

It is found in the cytoplasm. The protein localises to the nucleus. It carries out the reaction cytidine(32) in tRNA(Ser) + S-adenosyl-L-methionine = N(3)-methylcytidine(32) in tRNA(Ser) + S-adenosyl-L-homocysteine + H(+). In terms of biological role, S-adenosyl-L-methionine-dependent methyltransferase that mediates N(3)-methylcytidine modification of residue 32 of the tRNA anticodon loop of tRNA(Ser), including tRNA(Ser)(UGA) and tRNA(Ser)(GCU). Interaction with SARS1/SerRS is required for N(3)-methylcytidine methylation. This Mus musculus (Mouse) protein is tRNA N(3)-cytidine methyltransferase METTL6.